The primary structure comprises 65 residues: UPF0434 protein VFMJ11_A0475 (65 aa).

This sequence belongs to the UPF0434 family.

The sequence is that of UPF0434 protein VFMJ11_A0475 from Aliivibrio fischeri (strain MJ11) (Vibrio fischeri).